The following is a 134-amino-acid chain: Large-conductance mechanosensitive channel (134 aa).

2 helical membrane passes run Phe-10 to Gly-30 and Gly-76 to Ile-96.

It belongs to the MscL family. As to quaternary structure, homopentamer.

The protein localises to the cell inner membrane. Functionally, channel that opens in response to stretch forces in the membrane lipid bilayer. May participate in the regulation of osmotic pressure changes within the cell. The chain is Large-conductance mechanosensitive channel from Prosthecochloris aestuarii (strain DSM 271 / SK 413).